The following is an 86-amino-acid chain: ATP synthase subunit c (86 aa).

2 helical membrane-spanning segments follow: residues 4–24 and 57–77; these read AIVAAASAIGAGIAVATGIGA and VAIAESSAIYGLVISIILLFV.

This sequence belongs to the ATPase C chain family. In terms of assembly, F-type ATPases have 2 components, F(1) - the catalytic core - and F(0) - the membrane proton channel. F(1) has five subunits: alpha(3), beta(3), gamma(1), delta(1), epsilon(1). F(0) has three main subunits: a(1), b(2) and c(10-14). The alpha and beta chains form an alternating ring which encloses part of the gamma chain. F(1) is attached to F(0) by a central stalk formed by the gamma and epsilon chains, while a peripheral stalk is formed by the delta and b chains.

Its subcellular location is the cell membrane. Its function is as follows. F(1)F(0) ATP synthase produces ATP from ADP in the presence of a proton or sodium gradient. F-type ATPases consist of two structural domains, F(1) containing the extramembraneous catalytic core and F(0) containing the membrane proton channel, linked together by a central stalk and a peripheral stalk. During catalysis, ATP synthesis in the catalytic domain of F(1) is coupled via a rotary mechanism of the central stalk subunits to proton translocation. Key component of the F(0) channel; it plays a direct role in translocation across the membrane. A homomeric c-ring of between 10-14 subunits forms the central stalk rotor element with the F(1) delta and epsilon subunits. The protein is ATP synthase subunit c of Clostridioides difficile (strain 630) (Peptoclostridium difficile).